Consider the following 196-residue polypeptide: Large ribosomal subunit protein mL66 (196 aa).

The transit peptide at 1 to 34 (MAALNVLVSGCGRFLRGLLTGPTVTSWARPPARG) directs the protein to the mitochondrion.

The protein belongs to the bacterial ribosomal protein bS18 family. Mitochondrion-specific ribosomal protein mL66 subfamily. As to quaternary structure, component of the mitochondrial ribosome small subunit (28S) which comprises a 12S rRNA and about 30 distinct proteins.

It is found in the mitochondrion. This Bos taurus (Bovine) protein is Large ribosomal subunit protein mL66 (MRPS18A).